A 385-amino-acid chain; its full sequence is Glycine/sarcosine/betaine reductase complex component C subunit alpha (385 aa).

Cys359 is a catalytic residue.

In terms of assembly, heterooctamer of four alpha and four beta subunits. Component of the glycine, sarcosine and betaine reductase complexes, together with proteins A and B.

It catalyses the reaction acetyl phosphate + [thioredoxin]-disulfide + NH4(+) + H2O = [thioredoxin]-dithiol + glycine + phosphate + H(+). It carries out the reaction acetyl phosphate + methylamine + [thioredoxin]-disulfide + H2O = sarcosine + [thioredoxin]-dithiol + phosphate + H(+). The catalysed reaction is acetyl phosphate + trimethylamine + [thioredoxin]-disulfide + H2O = glycine betaine + [thioredoxin]-dithiol + phosphate + H(+). In terms of biological role, in the first step of glycine, betaine and sarcosine reductases, the substrate is bound to component PB via a Schiff base intermediate. Then the PB-activated substrate is nucleophilically attacked by the selenol anion of component PA to transform it to a carboxymethylated selenoether and the respective amine. By action of component PC, acetyl phosphate is formed, leaving component PA in its oxidized state. Finally component PA becomes reduced by the thioredoxin system to start a new catalytic cycle of reductive deamination. In Peptoclostridium acidaminophilum (Eubacterium acidaminophilum), this protein is Glycine/sarcosine/betaine reductase complex component C subunit alpha (grdD).